A 150-amino-acid polypeptide reads, in one-letter code: SsrA-binding protein (150 aa).

This sequence belongs to the SmpB family.

It is found in the cytoplasm. Its function is as follows. Required for rescue of stalled ribosomes mediated by trans-translation. Binds to transfer-messenger RNA (tmRNA), required for stable association of tmRNA with ribosomes. tmRNA and SmpB together mimic tRNA shape, replacing the anticodon stem-loop with SmpB. tmRNA is encoded by the ssrA gene; the 2 termini fold to resemble tRNA(Ala) and it encodes a 'tag peptide', a short internal open reading frame. During trans-translation Ala-aminoacylated tmRNA acts like a tRNA, entering the A-site of stalled ribosomes, displacing the stalled mRNA. The ribosome then switches to translate the ORF on the tmRNA; the nascent peptide is terminated with the 'tag peptide' encoded by the tmRNA and targeted for degradation. The ribosome is freed to recommence translation, which seems to be the essential function of trans-translation. This Borrelia garinii subsp. bavariensis (strain ATCC BAA-2496 / DSM 23469 / PBi) (Borreliella bavariensis) protein is SsrA-binding protein.